We begin with the raw amino-acid sequence, 130 residues long: UPF0102 protein TDE_2303 (130 aa).

It belongs to the UPF0102 family.

The polypeptide is UPF0102 protein TDE_2303 (Treponema denticola (strain ATCC 35405 / DSM 14222 / CIP 103919 / JCM 8153 / KCTC 15104)).